A 104-amino-acid chain; its full sequence is Small ribosomal subunit protein bS6c (104 aa).

The protein belongs to the bacterial ribosomal protein bS6 family.

Its subcellular location is the plastid. It is found in the cyanelle. Functionally, binds together with bS18 to 16S ribosomal RNA. This Cyanophora paradoxa protein is Small ribosomal subunit protein bS6c (rps6).